The primary structure comprises 245 residues: E3 ubiquitin-protein ligase RNF138 (245 aa).

Position 2 is an N-acetylalanine (alanine 2). An RING-type zinc finger spans residues cysteine 18–arginine 58. Cysteine 86, cysteine 89, histidine 101, and cysteine 105 together coordinate Zn(2+). The C2HC RNF-type zinc finger occupies cysteine 86–cysteine 105. The interval valine 128 to glycine 153 is disordered. 2 consecutive C2H2-type zinc fingers follow at residues phenylalanine 157–histidine 180 and valine 187–histidine 215. Residues leucine 225–valine 243 enclose the UIM domain.

As to quaternary structure, interacts with NLK. Interacts with XRCC5/Ku80. Interacts with RBBP8/CtIP. Post-translationally, auto-ubiquitinated.

It localises to the chromosome. It catalyses the reaction S-ubiquitinyl-[E2 ubiquitin-conjugating enzyme]-L-cysteine + [acceptor protein]-L-lysine = [E2 ubiquitin-conjugating enzyme]-L-cysteine + N(6)-ubiquitinyl-[acceptor protein]-L-lysine.. Its pathway is protein modification; protein ubiquitination. E3 ubiquitin-protein ligase involved in DNA damage response by promoting DNA resection and homologous recombination. Recruited to sites of double-strand breaks following DNA damage and specifically promotes double-strand break repair via homologous recombination. Two different, non-exclusive, mechanisms have been proposed. According to a report, regulates the choice of double-strand break repair by favoring homologous recombination over non-homologous end joining (NHEJ): acts by mediating ubiquitination of XRCC5/Ku80, leading to remove the Ku complex from DNA breaks, thereby promoting homologous recombination. According to another report, cooperates with UBE2Ds E2 ubiquitin ligases (UBE2D1, UBE2D2, UBE2D3 or UBE2D4) to promote homologous recombination by mediating ubiquitination of RBBP8/CtIP. Together with NLK, involved in the ubiquitination and degradation of TCF/LEF. Also exhibits auto-ubiquitination activity in combination with UBE2K. May act as a negative regulator in the Wnt/beta-catenin-mediated signaling pathway. The sequence is that of E3 ubiquitin-protein ligase RNF138 (RNF138) from Bos taurus (Bovine).